A 424-amino-acid chain; its full sequence is Homeobox-containing protein 1 (424 aa).

Residues 1-30 (MLFTIEQLELIKKLQHTGMSSDQLLKAFGE) form the HNF-p1 domain. The region spanning 103–199 (SQRTPMKEIT…PNKLAAFLAD (97 aa)) is the POU-specific atypical domain. The segment at residues 215–291 (QRRERYVFRP…NKRKELRRRS (77 aa)) is a DNA-binding region (homeobox). Residues 291-345 (SAEASAASTSSASSSASSTANHDSVSVSSMSPRDEETSSRNTTPETAISPSPAVS) are disordered. Positions 293 to 310 (EASAASTSSASSSASSTA) are enriched in low complexity. Polar residues-rich tracts occupy residues 311 to 321 (NHDSVSVSSMS) and 329 to 345 (SRNTTPETAISPSPAVS).

The protein belongs to the HMBOX1 homeobox family. Expressed in both AWC neurons. Also expressed in the FLP mechanosensory neurons.

It localises to the nucleus. Transcriptional repressor which maintains cell fate asymmetry of AWC neurons in adults by repressing the expression of multiple AWC (OFF) genes, including srsx-3 in the AWC (ON) neuron. The polypeptide is Homeobox-containing protein 1 (Caenorhabditis elegans).